The primary structure comprises 56 residues: Small ribosomal subunit protein bS21 (56 aa).

Belongs to the bacterial ribosomal protein bS21 family.

The chain is Small ribosomal subunit protein bS21 (rpsU) from Geobacillus stearothermophilus (Bacillus stearothermophilus).